Reading from the N-terminus, the 105-residue chain is Large ribosomal subunit protein uL24 (105 aa).

This sequence belongs to the universal ribosomal protein uL24 family. Part of the 50S ribosomal subunit.

In terms of biological role, one of two assembly initiator proteins, it binds directly to the 5'-end of the 23S rRNA, where it nucleates assembly of the 50S subunit. One of the proteins that surrounds the polypeptide exit tunnel on the outside of the subunit. The sequence is that of Large ribosomal subunit protein uL24 from Vibrio campbellii (strain ATCC BAA-1116).